Consider the following 440-residue polypeptide: 3-phosphoshikimate 1-carboxyvinyltransferase (440 aa).

3 residues coordinate 3-phosphoshikimate: K28, S29, and R33. Position 28 (K28) interacts with phosphoenolpyruvate. Phosphoenolpyruvate-binding residues include G98 and R126. Residues S171, Q173, D318, and K345 each coordinate 3-phosphoshikimate. Q173 serves as a coordination point for phosphoenolpyruvate. Residue D318 is the Proton acceptor of the active site. Phosphoenolpyruvate-binding residues include R349 and R391.

This sequence belongs to the EPSP synthase family. Monomer.

Its subcellular location is the cytoplasm. The enzyme catalyses 3-phosphoshikimate + phosphoenolpyruvate = 5-O-(1-carboxyvinyl)-3-phosphoshikimate + phosphate. It functions in the pathway metabolic intermediate biosynthesis; chorismate biosynthesis; chorismate from D-erythrose 4-phosphate and phosphoenolpyruvate: step 6/7. Its function is as follows. Catalyzes the transfer of the enolpyruvyl moiety of phosphoenolpyruvate (PEP) to the 5-hydroxyl of shikimate-3-phosphate (S3P) to produce enolpyruvyl shikimate-3-phosphate and inorganic phosphate. In Anaeromyxobacter dehalogenans (strain 2CP-C), this protein is 3-phosphoshikimate 1-carboxyvinyltransferase.